Here is a 468-residue protein sequence, read N- to C-terminus: Zinc transporter SLC39A7 (468 aa).

Residues 10–30 traverse the membrane as a helical segment; sequence WVAVGLLTWAALGLLVAGHEG. Composition is skewed to basic and acidic residues over residues 36 to 56 and 64 to 100; these read RDVEEDFHGHSHGHSHEDFHH and HTHESIWHGHAHSHDHGHSREDVHHGHSHGHSHDSLH. The interval 36–116 is disordered; the sequence is RDVEEDFHGH…SHGASREAGA (81 aa). Histidine 64 is subject to Pros-methylhistidine. 3 helical membrane passes run 132–152, 163–183, and 208–228; these read ALGATVLISAAPFFVLFLIPV, LQILLSFASGGLLGDAFLHLI, and GPILSVGLWVLSGIVAFLVVE. The segment covering 237–248 has biased composition (basic residues); sequence GHGHAHAHGHGH. The interval 237-313 is disordered; it reads GHGHAHAHGH…NPEEEKTGSD (77 aa). Residues 249 to 312 are compositionally biased toward basic and acidic residues; that stretch reads SHGDSHAHGH…QNPEEEKTGS (64 aa). 3 helical membrane passes run 385–405, 409–429, and 447–467; these read LTAIGALAGTACALLTEGGAV, VAGGAGPGWVLPFTAGGFIYV, and SLLEVLGLLGGVAMMVLIAHL.

The protein belongs to the ZIP transporter (TC 2.A.5) family. KE4/Catsup subfamily. Homodimer. Post-translationally, rapidly phosphorylated by CK2 following Zn(2+) treatment. This phosphorylation is required for efficient cytosolic Zn(2+) release.

It localises to the endoplasmic reticulum membrane. Its subcellular location is the golgi apparatus. The protein resides in the cis-Golgi network membrane. It carries out the reaction Zn(2+)(in) = Zn(2+)(out). Transports Zn(2+) from the endoplasmic reticulum (ER)/Golgi apparatus to the cytosol, playing an essential role in the regulation of cytosolic zinc levels. Acts as a gatekeeper of zinc release from intracellular stores, requiring post-translational activation by phosphorylation on residues, resulting in activation of multiple downstream pathways leading to cell growth and proliferation. Has an essential role in B cell development and is required for proper B cell receptor signaling. Plays an important role in maintaining intestinal epithelial homeostasis and skin dermis development by regulating ER function. Controls cell signaling pathways involved in glucose metabolism in skeletal muscle. Has a protective role against ER stress in different biological contexts. Mediates Zn(2+)-induced ferroptosis. The sequence is that of Zinc transporter SLC39A7 from Rattus norvegicus (Rat).